The sequence spans 465 residues: ATP-sulfurylase 3, chloroplastic (465 aa).

Residues 1-49 constitute a chloroplast transit peptide; the sequence is MASMSTVFPKPTSFISQPLTKSHKSDSVTTSISFPSNSKTRSLRTISVR.

Belongs to the sulfate adenylyltransferase family. As to quaternary structure, homotetramer.

It is found in the plastid. It localises to the chloroplast stroma. The catalysed reaction is sulfate + ATP + H(+) = adenosine 5'-phosphosulfate + diphosphate. The protein operates within sulfur metabolism; hydrogen sulfide biosynthesis; sulfite from sulfate: step 1/3. The protein is ATP-sulfurylase 3, chloroplastic (APS3) of Arabidopsis thaliana (Mouse-ear cress).